Reading from the N-terminus, the 414-residue chain is Serine--tRNA ligase (414 aa).

230–232 (TSE) contacts L-serine. 261-263 (RQE) contributes to the ATP binding site. E284 provides a ligand contact to L-serine. An ATP-binding site is contributed by 348 to 351 (EISS). Residue S382 coordinates L-serine.

It belongs to the class-II aminoacyl-tRNA synthetase family. Type-1 seryl-tRNA synthetase subfamily. In terms of assembly, homodimer. The tRNA molecule binds across the dimer.

The protein resides in the cytoplasm. It carries out the reaction tRNA(Ser) + L-serine + ATP = L-seryl-tRNA(Ser) + AMP + diphosphate + H(+). It catalyses the reaction tRNA(Sec) + L-serine + ATP = L-seryl-tRNA(Sec) + AMP + diphosphate + H(+). It participates in aminoacyl-tRNA biosynthesis; selenocysteinyl-tRNA(Sec) biosynthesis; L-seryl-tRNA(Sec) from L-serine and tRNA(Sec): step 1/1. Functionally, catalyzes the attachment of serine to tRNA(Ser). Is also able to aminoacylate tRNA(Sec) with serine, to form the misacylated tRNA L-seryl-tRNA(Sec), which will be further converted into selenocysteinyl-tRNA(Sec). The sequence is that of Serine--tRNA ligase from Campylobacter concisus (strain 13826).